The chain runs to 373 residues: Probable G-protein coupled receptor 173 (373 aa).

Residues 1 to 26 (MANTTGEPEEVSGALSPPSASAYVKL) are Extracellular-facing. Residue N3 is glycosylated (N-linked (GlcNAc...) asparagine). A helical transmembrane segment spans residues 27–47 (VLLGLIMCVSLAGNAILSLLV). The Cytoplasmic portion of the chain corresponds to 48 to 59 (LKERALHKAPYY). The chain crosses the membrane as a helical span at residues 60–80 (FLLDLCLADGIRSAVCFPFVL). Over 81-97 (ASVRHGSSWTFSALSCK) the chain is Extracellular. Residues C96 and C174 are joined by a disulfide bond. The helical transmembrane segment at 98–118 (IVAFMAVLFCFHAAFMLFCIS) threads the bilayer. Residues 119 to 139 (VTRYMAIAHHRFYAKRMTLWT) are Cytoplasmic-facing. Residues 140–160 (CAAVICMAWTLSVAMAFPPVF) traverse the membrane as a helical segment. Topologically, residues 161-188 (DVGTYKFIREEDQCIFEHRYFKANDTLG) are extracellular. N184 carries N-linked (GlcNAc...) asparagine glycosylation. The helical transmembrane segment at 189-209 (FMLMLAVLMAATHAVYGKLLL) threads the bilayer. Topologically, residues 210-287 (FEYRHRKMKP…VKGEKQLGRM (78 aa)) are cytoplasmic. A helical transmembrane segment spans residues 288–308 (FYAITLLFLLLWSPYIVACYW). Over 309–322 (RVFVKACAVPHRYL) the chain is Extracellular. The chain crosses the membrane as a helical span at residues 323–343 (ATAVWMSFAQAAVNPIVCFLL). Topologically, residues 344-373 (NKDLKKCLRTHAPCWGTGGAPAPREPYCVM) are cytoplasmic.

The protein belongs to the G-protein coupled receptor 1 family. In terms of tissue distribution, expressed in the ovary, specifically in granulosa cells of follicles that have passed the primary stage and in oocytes (at protein level). Expressed at high levels in brain. Lower levels in small intestine. In brain regions, detected in all regions tested. Highest levels in the cerebellum and cerebral cortex.

It is found in the cell membrane. Functionally, is a receptor for the SMIM20 derived peptides Phoenixin-14 and Phoenixin-20. It mediates the Phoenixin-14 and Phoenixin-20 augmentation of gonadotropin-releasing hormone (GNRH) signaling in the hypothalamus and pituitary gland. In the ovary, it mediates the effects of Phoenixin-14 and Phoenixin-20 induced granulosa cell proliferation during follicular growth. The sequence is that of Probable G-protein coupled receptor 173 (GPR173) from Homo sapiens (Human).